Reading from the N-terminus, the 286-residue chain is ATP synthase gamma chain (286 aa).

The protein belongs to the ATPase gamma chain family. In terms of assembly, F-type ATPases have 2 components, CF(1) - the catalytic core - and CF(0) - the membrane proton channel. CF(1) has five subunits: alpha(3), beta(3), gamma(1), delta(1), epsilon(1). CF(0) has three main subunits: a, b and c.

It localises to the cell inner membrane. Its function is as follows. Produces ATP from ADP in the presence of a proton gradient across the membrane. The gamma chain is believed to be important in regulating ATPase activity and the flow of protons through the CF(0) complex. The protein is ATP synthase gamma chain of Pseudoalteromonas atlantica (strain T6c / ATCC BAA-1087).